We begin with the raw amino-acid sequence, 356 residues long: 45 kDa calcium-binding protein (356 aa).

Residues 1 to 29 (MMSRQAFLCSLGSLYLSLLFVFLLMDVYA) form the signal peptide. Asparagine 33 carries an N-linked (GlcNAc...) asparagine glycan. EF-hand domains follow at residues 92–127 (KNRKKLMVIFSKVDIDNDKKISAKEMQRWIMEKTDE), 131–166 (EAVEENKMHFRAVDPDGDGHVSWDEYKIKFLASKGL), 227–262 (MLKFMVKEIIRDLDQDGDKKLTLSEFISLPVGTVEN), 272–307 (WVKDRRKEFEDVIDANHDGIVTMEELEEYMDPMNEY), and 308–343 (NALNEAKQMIAVADENQNHHLELEEILKYSEYFTGS). Positions 105, 107, 109, 111, 116, 144, 146, 148, 150, 155, 240, 242, 244, 246, 251, 285, 287, 289, 296, 321, 323, 325, 327, and 332 each coordinate Ca(2+).

The protein belongs to the CREC family.

The protein localises to the golgi apparatus lumen. In terms of biological role, may regulate calcium-dependent activities in the endoplasmic reticulum lumen or post-ER compartment. The protein is 45 kDa calcium-binding protein (SDF4) of Gallus gallus (Chicken).